Here is a 546-residue protein sequence, read N- to C-terminus: MLLDTLLELAGGINNVTRILAPQGQVVLALKHPPHAPHLPDDVSLQSVLGEWQLSVQRTAEVSDQQLAAIGKAIAERQKRATLPYQTALDCPYRPQWHISPPQGLLNDPNGFIYHQEEYHLFYQWHPFACEHKDKYWVHLKSLDLVHWQWQSVALTPSDWFDSHGVFSGHAVSHQQDLWLFYTGNTRLGTERQRQTMQCAARMNANGEFEKLGPVIRCLPEGVTEHIRDPKVIYTQGKWQMLLGAQTLAHQGRLAVYHSDDLLHWHFDKLYGDELGDYGYMWECPDWFELQGEAFFVFGPQGIASANPHHTIEHQNRIFRATQNAQGEIALLQGWPLDEGFDFYAPQTAQTADGRRVLCGWMGLPDETQHPSCDQGWIHQLTALRELEWREGKIYQHPLRELDTLQSEPHTLLLSDTVTELKTKSFDLQVTLPWGCELRLMQNAQYCVTLTLDAENRLLRLDRSATQIRQGDTIRELKLDSPTVELRILADQSSLEIFINQGEHVMTSRIFTPLDATGISLHGASVDAKLYYMAPASAPFNLEVNV.

Substrate-binding positions include 105–108, Gln124, 167–168, 228–229, and Glu283; these read LLND, FS, and RD. The active site involves Asp108.

This sequence belongs to the glycosyl hydrolase 32 family.

It localises to the cytoplasm. It catalyses the reaction Hydrolysis of terminal non-reducing beta-D-fructofuranoside residues in beta-D-fructofuranosides.. It participates in glycan biosynthesis; sucrose metabolism. Enables the bacterium to metabolize sucrose as a sole carbon source. This Vibrio cholerae serotype O1 (strain ATCC 39541 / Classical Ogawa 395 / O395) protein is Probable sucrose-6-phosphate hydrolase (cscA).